The primary structure comprises 323 residues: Voltage-dependent calcium channel gamma-2 subunit (323 aa).

A helical transmembrane segment spans residues 10–30; the sequence is MLLTTVGAFAAFSLMTIAVGT. Residue N48 is glycosylated (N-linked (GlcNAc...) asparagine). Transmembrane regions (helical) follow at residues 104–124, 134–154, and 182–202; these read SSIF…CIAA, IILS…IGII, and FGAL…HMFI. Positions 233 to 261 are disordered; the sequence is YQRRSRSSSRSTEPSHSRDASPVGIKGFN. Position 253 is a phosphoserine (S253). A Phosphotyrosine modification is found at Y271. T321 is subject to Phosphothreonine.

Belongs to the PMP-22/EMP/MP20 family. CACNG subfamily. The L-type calcium channel is composed of five subunits: alpha-1, alpha-2/delta, beta and gamma. Interacts with the PDZ domains of DLG4/PSD-95 and DLG1/SAP97. May interact with GOPC. Acts as an auxiliary subunit for AMPA-selective glutamate receptors (AMPARs). Found in a complex with GRIA1, GRIA2, GRIA3, GRIA4, CNIH2, CNIH3, CACNG3, CACNG4, CACNG5, CACNG7 and CACNG8. Interacts with GRIA1 and GRIA2. Interacts with MPP2. In terms of processing, phosphorylation of Thr-321 impairs interaction with DLG1 and DLG4. In terms of tissue distribution, brain.

The protein localises to the membrane. It is found in the synapse. Its subcellular location is the synaptosome. Its function is as follows. Regulates the trafficking and gating properties of AMPA-selective glutamate receptors (AMPARs). Promotes their targeting to the cell membrane and synapses and modulates their gating properties by slowing their rates of activation, deactivation and desensitization. Does not show subunit-specific AMPA receptor regulation and regulates all AMPAR subunits. Thought to stabilize the calcium channel in an inactivated (closed) state. This is Voltage-dependent calcium channel gamma-2 subunit (CACNG2) from Homo sapiens (Human).